A 105-amino-acid chain; its full sequence is MTVSCSKVLLSLCLFLMLLKATHESNQQRTNFREFFEIQLAQETREINEKNNQPLNQQLPQLNRRKRLWRDEDRRTFCTTLCPCEDRRKRAAVTPPTRKVPCCCP.

The first 21 residues, Met-1–Ala-21, serve as a signal peptide directing secretion.

The protein belongs to the scolopendra neurotoxin 10 family. In terms of processing, contains 3 disulfide bonds. Expressed by the venom gland.

It localises to the secreted. This chain is Putative neurotoxin 10, found in Scolopendra subspinipes (Vietnamese centipede).